Consider the following 209-residue polypeptide: MQGVTIVDHPLVRHKLTRMRDKQTSTKTFRALMRETATLLCYEVTRALPTHTVEIETPVGPTKAEEISGKKMVFAPILRAGLGMAEGMLDLVPSARVAHIGLFRDPVSLEAVEYYYKTPDDIADRLVIVVDPMLATGHTAVAAIARLKRSGVTDLRFVCLVASVQGVETLRAAHPDVPIWTAAVDAELNDHGYIVPGLGDAGDRTFGTR.

5-phospho-alpha-D-ribose 1-diphosphate is bound by residues Arg79, Arg104, and 131–139; that span reads DPMLATGHT. Uracil is bound by residues Ile194 and 199-201; that span reads GDA. Asp200 contacts 5-phospho-alpha-D-ribose 1-diphosphate.

This sequence belongs to the UPRTase family. It depends on Mg(2+) as a cofactor.

It carries out the reaction UMP + diphosphate = 5-phospho-alpha-D-ribose 1-diphosphate + uracil. The protein operates within pyrimidine metabolism; UMP biosynthesis via salvage pathway; UMP from uracil: step 1/1. With respect to regulation, allosterically activated by GTP. Catalyzes the conversion of uracil and 5-phospho-alpha-D-ribose 1-diphosphate (PRPP) to UMP and diphosphate. The polypeptide is Uracil phosphoribosyltransferase (Caulobacter sp. (strain K31)).